The following is a 601-amino-acid chain: A-type ATP synthase subunit A (601 aa).

Residue 235-242 (GGFGTGKT) participates in ATP binding.

Belongs to the ATPase alpha/beta chains family. In terms of assembly, has multiple subunits with at least A(3), B(3), C, D, E, F, H, I and proteolipid K(x).

It is found in the cell membrane. The catalysed reaction is ATP + H2O + 4 H(+)(in) = ADP + phosphate + 5 H(+)(out). In terms of biological role, component of the A-type ATP synthase that produces ATP from ADP in the presence of a proton gradient across the membrane. The A chain is the catalytic subunit. The polypeptide is A-type ATP synthase subunit A (Thermofilum pendens (strain DSM 2475 / Hrk 5)).